The sequence spans 517 residues: Ribonuclease Y (517 aa).

A helical membrane pass occupies residues 3–23 (AILYVIVAVIALILGGAAGVA). The KH domain maps to 207–292 (TVTVVSLPND…EMVEKAQKEV (86 aa)). Positions 333 to 426 (VLKHSIEVAH…VAAADAISAA (94 aa)) constitute an HD domain.

Belongs to the RNase Y family.

It is found in the cell membrane. In terms of biological role, endoribonuclease that initiates mRNA decay. The chain is Ribonuclease Y from Symbiobacterium thermophilum (strain DSM 24528 / JCM 14929 / IAM 14863 / T).